A 530-amino-acid polypeptide reads, in one-letter code: Phosphoenolpyruvate carboxykinase (ATP) (530 aa).

Positions 58, 195, and 201 each coordinate substrate. ATP is bound by residues lysine 201, histidine 220, and 236-244; that span reads GLSGTGKTT. Residues lysine 201 and histidine 220 each contribute to the Mn(2+) site. Aspartate 257 is a binding site for Mn(2+). ATP is bound by residues glutamate 285, arginine 321, 440–441, and threonine 446; that span reads RI. A substrate-binding site is contributed by arginine 321.

The protein belongs to the phosphoenolpyruvate carboxykinase (ATP) family. The cofactor is Mn(2+).

It is found in the cytoplasm. It catalyses the reaction oxaloacetate + ATP = phosphoenolpyruvate + ADP + CO2. Its pathway is carbohydrate biosynthesis; gluconeogenesis. Involved in the gluconeogenesis. Catalyzes the conversion of oxaloacetate (OAA) to phosphoenolpyruvate (PEP) through direct phosphoryl transfer between the nucleoside triphosphate and OAA. This Staphylococcus epidermidis (strain ATCC 35984 / DSM 28319 / BCRC 17069 / CCUG 31568 / BM 3577 / RP62A) protein is Phosphoenolpyruvate carboxykinase (ATP).